The following is a 267-amino-acid chain: Ribosomal RNA small subunit methyltransferase A (267 aa).

Residues histidine 13, leucine 15, glycine 40, glutamate 61, aspartate 85, and asparagine 105 each contribute to the S-adenosyl-L-methionine site.

It belongs to the class I-like SAM-binding methyltransferase superfamily. rRNA adenine N(6)-methyltransferase family. RsmA subfamily.

The protein localises to the cytoplasm. The enzyme catalyses adenosine(1518)/adenosine(1519) in 16S rRNA + 4 S-adenosyl-L-methionine = N(6)-dimethyladenosine(1518)/N(6)-dimethyladenosine(1519) in 16S rRNA + 4 S-adenosyl-L-homocysteine + 4 H(+). Specifically dimethylates two adjacent adenosines (A1518 and A1519) in the loop of a conserved hairpin near the 3'-end of 16S rRNA in the 30S particle. May play a critical role in biogenesis of 30S subunits. The polypeptide is Ribosomal RNA small subunit methyltransferase A (Bacteroides thetaiotaomicron (strain ATCC 29148 / DSM 2079 / JCM 5827 / CCUG 10774 / NCTC 10582 / VPI-5482 / E50)).